The primary structure comprises 347 residues: Holliday junction branch migration complex subunit RuvB (347 aa).

Residues 4 to 186 form a large ATPase domain (RuvB-L) region; sequence INEYGSERIV…FGMIFEMNFY (183 aa). ATP is bound by residues Leu25, Arg26, Gly67, Lys70, Thr71, Thr72, 133–135, Arg176, Tyr186, and Arg223; that span reads EDF. Thr71 is a Mg(2+) binding site. Positions 187 to 257 are small ATPAse domain (RuvB-S); that stretch reads TQEELKMIIT…IVEEVMRLLG (71 aa). The head domain (RuvB-H) stretch occupies residues 260-347; it reads EFGLDEMDRK…GLFDGFGNIE (88 aa). Positions 315 and 320 each coordinate DNA.

This sequence belongs to the RuvB family. Homohexamer. Forms an RuvA(8)-RuvB(12)-Holliday junction (HJ) complex. HJ DNA is sandwiched between 2 RuvA tetramers; dsDNA enters through RuvA and exits via RuvB. An RuvB hexamer assembles on each DNA strand where it exits the tetramer. Each RuvB hexamer is contacted by two RuvA subunits (via domain III) on 2 adjacent RuvB subunits; this complex drives branch migration. In the full resolvosome a probable DNA-RuvA(4)-RuvB(12)-RuvC(2) complex forms which resolves the HJ.

It is found in the cytoplasm. The enzyme catalyses ATP + H2O = ADP + phosphate + H(+). The RuvA-RuvB-RuvC complex processes Holliday junction (HJ) DNA during genetic recombination and DNA repair, while the RuvA-RuvB complex plays an important role in the rescue of blocked DNA replication forks via replication fork reversal (RFR). RuvA specifically binds to HJ cruciform DNA, conferring on it an open structure. The RuvB hexamer acts as an ATP-dependent pump, pulling dsDNA into and through the RuvAB complex. RuvB forms 2 homohexamers on either side of HJ DNA bound by 1 or 2 RuvA tetramers; 4 subunits per hexamer contact DNA at a time. Coordinated motions by a converter formed by DNA-disengaged RuvB subunits stimulates ATP hydrolysis and nucleotide exchange. Immobilization of the converter enables RuvB to convert the ATP-contained energy into a lever motion, pulling 2 nucleotides of DNA out of the RuvA tetramer per ATP hydrolyzed, thus driving DNA branch migration. The RuvB motors rotate together with the DNA substrate, which together with the progressing nucleotide cycle form the mechanistic basis for DNA recombination by continuous HJ branch migration. Branch migration allows RuvC to scan DNA until it finds its consensus sequence, where it cleaves and resolves cruciform DNA. The protein is Holliday junction branch migration complex subunit RuvB of Fervidobacterium nodosum (strain ATCC 35602 / DSM 5306 / Rt17-B1).